The following is a 97-amino-acid chain: Large ribosomal subunit protein bL27 (97 aa).

The propeptide occupies 1 to 12 (MLKMNLANLQLF). Residues 14-37 (HKKGGGSTSNGRDSQAKRLGAKAA) are disordered.

It belongs to the bacterial ribosomal protein bL27 family. Post-translationally, the N-terminus is cleaved by ribosomal processing cysteine protease Prp.

In Streptococcus gordonii (strain Challis / ATCC 35105 / BCRC 15272 / CH1 / DL1 / V288), this protein is Large ribosomal subunit protein bL27.